A 259-amino-acid chain; its full sequence is Small ribosomal subunit protein uS7m (259 aa).

The transit peptide at 1-39 (MLRLIKQPLFRCASSGHLMKESLVFIHQTRTFQVGKFTS) directs the protein to the mitochondrion. T157 bears the Phosphothreonine mark.

The protein belongs to the universal ribosomal protein uS7 family. As to quaternary structure, component of the mitochondrial small ribosomal subunit (mt-SSU). Mature yeast 74S mitochondrial ribosomes consist of a small (37S) and a large (54S) subunit. The 37S small subunit contains a 15S ribosomal RNA (15S mt-rRNA) and at least 32 different proteins. The 54S large subunit contains a 21S rRNA (21S mt-rRNA) and at least 45 different proteins.

Its subcellular location is the mitochondrion. Its function is as follows. Component of the mitochondrial ribosome (mitoribosome), a dedicated translation machinery responsible for the synthesis of mitochondrial genome-encoded proteins, including at least some of the essential transmembrane subunits of the mitochondrial respiratory chain. The mitoribosomes are attached to the mitochondrial inner membrane and translation products are cotranslationally integrated into the membrane. This chain is Small ribosomal subunit protein uS7m (rsm7), found in Schizosaccharomyces pombe (strain 972 / ATCC 24843) (Fission yeast).